Consider the following 233-residue polypeptide: 7-cyano-7-deazaguanine synthase (233 aa).

8–18 (LSGGLDSTTCM) is a binding site for ATP. Positions 186, 194, 197, and 200 each coordinate Zn(2+).

The protein belongs to the QueC family. Homodimer. Requires Zn(2+) as cofactor.

The enzyme catalyses 7-carboxy-7-deazaguanine + NH4(+) + ATP = 7-cyano-7-deazaguanine + ADP + phosphate + H2O + H(+). Its pathway is purine metabolism; 7-cyano-7-deazaguanine biosynthesis. Catalyzes the ATP-dependent conversion of 7-carboxy-7-deazaguanine (CDG) to 7-cyano-7-deazaguanine (preQ(0)). In Desulfitobacterium hafniense (strain DSM 10664 / DCB-2), this protein is 7-cyano-7-deazaguanine synthase.